The chain runs to 328 residues: MTYSRNIFIPLTRACRNRCGYCTFRSDTPEPPLLEPEDVMGEVRRALSLGCTEALFTFGEDAHEFPGVRDKLESLGFGDMTDYTYHLCELTLDAGLLPHTNMGVIGYRELRMLKEVNASMGLMLESASPRLMETEAHRESPGKNPRLRIKMIEDAGRLRIPFTTGLLIGIGETIEERAESLLELRRIQDRYGHIQEIIIQNFRSKPGIPMENQREPSLLEMVKMVAAAKIMFPDVSIQVPPNLNRETGEIFLLAGADDWGGVSPISRDYVNPEAPWPEIDELKRITESAGFALEERLPVYRKFISREFLSPRVMERIEELYPRFIETL.

In terms of domain architecture, Radical SAM core spans 1 to 242 (MTYSRNIFIP…PDVSIQVPPN (242 aa)). Residues Cys15, Cys19, and Cys22 each coordinate [4Fe-4S] cluster.

This sequence belongs to the radical SAM superfamily. CofG family. Consists of two subunits, CofG and CofH. Requires [4Fe-4S] cluster as cofactor.

It catalyses the reaction 5-amino-5-(4-hydroxybenzyl)-6-(D-ribitylimino)-5,6-dihydrouracil + S-adenosyl-L-methionine = 7,8-didemethyl-8-hydroxy-5-deazariboflavin + 5'-deoxyadenosine + L-methionine + NH4(+) + H(+). It participates in cofactor biosynthesis; coenzyme F0 biosynthesis. Functionally, catalyzes the radical-mediated synthesis of 7,8-didemethyl-8-hydroxy-5-deazariboflavin from 5-amino-5-(4-hydroxybenzyl)-6-(D-ribitylimino)-5,6-dihydrouracil. This Methanothermobacter thermautotrophicus (strain ATCC 29096 / DSM 1053 / JCM 10044 / NBRC 100330 / Delta H) (Methanobacterium thermoautotrophicum) protein is 7,8-didemethyl-8-hydroxy-5-deazariboflavin synthase.